The chain runs to 681 residues: MSNNTTSLPAENSSHPRKGTPIRKKQREEAQQFINTLQGVTFPNSQRIYLQGSRPDIQVPMREIQLSPTQIGGSKNEPRYEDNEAIPVYDTSGPYGDPQAKLDVHNGLPKLRAAWVADRQDTEALASVSSGFTQQRLADEGLDHLRFEHLPRPRKAATGQCVTQLHYARQGKITPEMEFIALRENMGRERIRGEVLLQQHPGQAFGAHLPENITAEFVRQEVAAGRAIIPANINHPESEPMIIGRNFLVKVNANIGNSAVTSSIEEEVEKLVWSTRWGADTVMDLSTGRYIHETREWILRNSPVPIGTVPIYQALEKVNGVAENLTWEMFRDTLLEQAEQGVDYFTLHAGVLLRYVPMTAKRLTGIVSRGGSIMAKWCLSHHQENFLYQHFREICQICAAYDVSLSLGDGLRPGSIQDANDEAQFAELHTLGELTKIAWEYDVQVMIEGPGHVPMQMIRRNMTEELEHCHEAPFYTLGPLTTDIAPGYDHFTSGIGAAMIGWFGCAMLCYVTPKEHLGLPNKEDVKQGLITYKIAAHAADLAKGHPGAQIRDNAMSKARFEFRWEDQFNLALDPATARAYHDETLPQESGKVAHFCSMCGPKFCSMKISQEVRDYAAAQEQAAAQAQAATPTTAAQPIDITQPINMLQSGMEKMSAEFRSRGSELYHRPANLSAEANNEPT.

Residues 1 to 13 are compositionally biased toward polar residues; sequence MSNNTTSLPAENS. The interval 1–29 is disordered; sequence MSNNTTSLPAENSSHPRKGTPIRKKQREE. The segment covering 15–25 has biased composition (basic residues); that stretch reads HPRKGTPIRKK. Substrate-binding positions include Asn254, Met283, Tyr312, His348, 368 to 370, 409 to 412, and Glu448; these read SRG and DGLR. Residue His452 participates in Zn(2+) binding. Tyr475 serves as a coordination point for substrate. Zn(2+) is bound at residue His516. 3 residues coordinate [4Fe-4S] cluster: Cys596, Cys599, and Cys604. Residues 658-667 are compositionally biased toward basic and acidic residues; it reads FRSRGSELYH. Positions 658-681 are disordered; that stretch reads FRSRGSELYHRPANLSAEANNEPT.

The protein belongs to the ThiC family. In terms of assembly, homodimer. It depends on [4Fe-4S] cluster as a cofactor.

The enzyme catalyses 5-amino-1-(5-phospho-beta-D-ribosyl)imidazole + S-adenosyl-L-methionine = 4-amino-2-methyl-5-(phosphooxymethyl)pyrimidine + CO + 5'-deoxyadenosine + formate + L-methionine + 3 H(+). Its pathway is cofactor biosynthesis; thiamine diphosphate biosynthesis. In terms of biological role, catalyzes the synthesis of the hydroxymethylpyrimidine phosphate (HMP-P) moiety of thiamine from aminoimidazole ribotide (AIR) in a radical S-adenosyl-L-methionine (SAM)-dependent reaction. This chain is Phosphomethylpyrimidine synthase, found in Yersinia pseudotuberculosis serotype I (strain IP32953).